A 22-amino-acid chain; its full sequence is SEKITVFQKGNFQVTEXSSHFV.

Belongs to the AB hydrolase superfamily. Lipase family.

It carries out the reaction a chlorophyll + H2O = a chlorophyllide + phytol + H(+). Its pathway is porphyrin-containing compound metabolism; chlorophyll degradation. Functionally, catalyzes the hydrolysis of ester bond in chlorophyll to yield chlorophyllide and phytol. The polypeptide is Chlorophyllase type 1 (Chenopodium album (Fat hen)).